The primary structure comprises 129 residues: MAKTPTRSRKRVKKQVADGMAHVHASFNNTIITITDRQGNALAWATAGGSGFRGSRKSTPFAAQVAAERAGEMAKEYGLKNLEVFVNGPGPGRESSIRALNAVGYKITNITDVTPIPHNGCRPPKKRRV.

Belongs to the universal ribosomal protein uS11 family. Part of the 30S ribosomal subunit. Interacts with proteins S7 and S18. Binds to IF-3.

Located on the platform of the 30S subunit, it bridges several disparate RNA helices of the 16S rRNA. Forms part of the Shine-Dalgarno cleft in the 70S ribosome. This chain is Small ribosomal subunit protein uS11, found in Idiomarina loihiensis (strain ATCC BAA-735 / DSM 15497 / L2-TR).